Here is a 78-residue protein sequence, read N- to C-terminus: uncharacterized protein (78 aa).

The next 2 membrane-spanning stretches (helical) occupy residues 25–45 (IITA…DEVV) and 50–70 (KCAD…FVFV).

The protein localises to the membrane. This is an uncharacterized protein from Saccharomyces cerevisiae (strain ATCC 204508 / S288c) (Baker's yeast).